The following is a 229-amino-acid chain: Cytochrome c oxidase subunit 2 (229 aa).

Over M1 to H26 the chain is Mitochondrial intermembrane. A helical membrane pass occupies residues A27–N48. Topologically, residues S49–E62 are mitochondrial matrix. Residues M63–R82 form a helical membrane-spanning segment. Residues L83–S229 are Mitochondrial intermembrane-facing. Residues H161, C196, E198, C200, H204, and M207 each coordinate Cu cation. E198 contacts Mg(2+).

The protein belongs to the cytochrome c oxidase subunit 2 family. Component of the cytochrome c oxidase (complex IV, CIV), a multisubunit enzyme composed of a catalytic core of 3 subunits and several supernumerary subunits. The complex exists as a monomer or a dimer and forms supercomplexes (SCs) in the inner mitochondrial membrane with ubiquinol-cytochrome c oxidoreductase (cytochrome b-c1 complex, complex III, CIII). Requires Cu cation as cofactor.

It is found in the mitochondrion inner membrane. It carries out the reaction 4 Fe(II)-[cytochrome c] + O2 + 8 H(+)(in) = 4 Fe(III)-[cytochrome c] + 2 H2O + 4 H(+)(out). Functionally, component of the cytochrome c oxidase, the last enzyme in the mitochondrial electron transport chain which drives oxidative phosphorylation. The respiratory chain contains 3 multisubunit complexes succinate dehydrogenase (complex II, CII), ubiquinol-cytochrome c oxidoreductase (cytochrome b-c1 complex, complex III, CIII) and cytochrome c oxidase (complex IV, CIV), that cooperate to transfer electrons derived from NADH and succinate to molecular oxygen, creating an electrochemical gradient over the inner membrane that drives transmembrane transport and the ATP synthase. Cytochrome c oxidase is the component of the respiratory chain that catalyzes the reduction of oxygen to water. Electrons originating from reduced cytochrome c in the intermembrane space (IMS) are transferred via the dinuclear copper A center (CU(A)) of subunit 2 and heme A of subunit 1 to the active site in subunit 1, a binuclear center (BNC) formed by heme A3 and copper B (CU(B)). The BNC reduces molecular oxygen to 2 water molecules using 4 electrons from cytochrome c in the IMS and 4 protons from the mitochondrial matrix. This chain is Cytochrome c oxidase subunit 2 (mt:CoII), found in Drosophila ambigua (Fruit fly).